A 281-amino-acid polypeptide reads, in one-letter code: Energy-coupling factor transporter ATP-binding protein EcfA2 (281 aa).

One can recognise an ABC transporter domain in the interval 3–242 (IKVTGLTYVY…TETLEEIGLA (240 aa)). Position 40–47 (40–47 (GHTGSGKS)) interacts with ATP.

It belongs to the ABC transporter superfamily. Energy-coupling factor EcfA family. As to quaternary structure, forms a stable energy-coupling factor (ECF) transporter complex composed of 2 membrane-embedded substrate-binding proteins (S component), 2 ATP-binding proteins (A component) and 2 transmembrane proteins (T component).

It localises to the cell membrane. Functionally, ATP-binding (A) component of a common energy-coupling factor (ECF) ABC-transporter complex. Unlike classic ABC transporters this ECF transporter provides the energy necessary to transport a number of different substrates. This chain is Energy-coupling factor transporter ATP-binding protein EcfA2, found in Acetivibrio thermocellus (strain ATCC 27405 / DSM 1237 / JCM 9322 / NBRC 103400 / NCIMB 10682 / NRRL B-4536 / VPI 7372) (Clostridium thermocellum).